We begin with the raw amino-acid sequence, 511 residues long: Lysine--tRNA ligase (511 aa).

Residues 1-21 (MHTEKDPNKNTPEQQTPISLN) are disordered. Residues 9–21 (KNTPEQQTPISLN) show a composition bias toward polar residues. Mg(2+) is bound by residues Glu422 and Glu429.

The protein belongs to the class-II aminoacyl-tRNA synthetase family. In terms of assembly, homodimer. It depends on Mg(2+) as a cofactor.

It is found in the cytoplasm. The enzyme catalyses tRNA(Lys) + L-lysine + ATP = L-lysyl-tRNA(Lys) + AMP + diphosphate. The polypeptide is Lysine--tRNA ligase (Pelodictyon phaeoclathratiforme (strain DSM 5477 / BU-1)).